A 249-amino-acid polypeptide reads, in one-letter code: tRNA (guanine-N(1)-)-methyltransferase (249 aa).

Residues Gly-113 and 133–138 each bind S-adenosyl-L-methionine; that span reads VGDYVL.

The protein belongs to the RNA methyltransferase TrmD family. In terms of assembly, homodimer.

The protein localises to the cytoplasm. The enzyme catalyses guanosine(37) in tRNA + S-adenosyl-L-methionine = N(1)-methylguanosine(37) in tRNA + S-adenosyl-L-homocysteine + H(+). Specifically methylates guanosine-37 in various tRNAs. This is tRNA (guanine-N(1)-)-methyltransferase from Tolumonas auensis (strain DSM 9187 / NBRC 110442 / TA 4).